We begin with the raw amino-acid sequence, 88 residues long: RQC P-site tRNA stabilizing factor (88 aa).

The 60-residue stretch at 1 to 60 (MRLDKYLKVSRIIKRRTVAKEVADKGRIKVNGILAKSSTDLKVNDQVEIRFGNKLLLVKV) folds into the S4 RNA-binding domain.

This sequence belongs to the RqcP family. As to quaternary structure, associates with stalled 50S ribosomal subunits. Binds to RqcH, 23S rRNA and the P-site tRNA. Does not require RqcH for association with 50S subunits.

Key component of the ribosome quality control system (RQC), a ribosome-associated complex that mediates the extraction of incompletely synthesized nascent chains from stalled ribosomes and their subsequent degradation. RqcH recruits Ala-charged tRNA, and with RqcP directs the elongation of stalled nascent chains on 50S ribosomal subunits, leading to non-templated C-terminal alanine extensions (Ala tail). The Ala tail promotes nascent chain degradation. RqcP is associated with the translocation-like movement of the peptidyl-tRNA from the A-site into the P-site. The polypeptide is RQC P-site tRNA stabilizing factor (Streptococcus pneumoniae (strain ATCC BAA-255 / R6)).